The chain runs to 303 residues: DDRGK domain-containing protein 1 (303 aa).

The Lumenal segment spans residues 1 to 2; that stretch reads MD. The chain crosses the membrane as a helical span at residues 3-23; that stretch reads LILLIGIATALLIILLTLYFL. Residues 24 to 303 lie on the Cytoplasmic side of the membrane; sequence QKRNAPAETK…TPVTASEGGA (280 aa). Disordered regions lie at residues 31–53 and 84–160; these read ETKAAAQPQRGVPLRAQEGVPRR and AIDP…AEVE. Over residues 106 to 160 the composition is skewed to basic and acidic residues; sequence LDEKMGAKKRAKMEAKEQKRLQREQELHDREQRKVKEAKEEAERKQQDDLDAEVE.

It belongs to the DDRGK1 family. Interacts with Atg9; the interaction is transient.

It localises to the endoplasmic reticulum membrane. In terms of biological role, substrate adapter for ufmylation, the covalent attachment of the ubiquitin-like modifier UFM1 to substrate proteins. Required for ufmylation of Atg9; protects the nervous system during aging, possibly by stabilizing Atg9 and supporting its function. The polypeptide is DDRGK domain-containing protein 1 (Drosophila grimshawi (Hawaiian fruit fly)).